The chain runs to 1150 residues: Serine/threonine-protein phosphatase 2A regulatory subunit B'' subunit alpha (1150 aa).

Residues 661–693 are disordered; the sequence is PEVIKIQNKPEKKPGTPLPPPATSPSSPRPLSP. Residues 676–693 show a composition bias toward pro residues; sequence TPLPPPATSPSSPRPLSP. EF-hand domains follow at residues 758–793 and 972–1007; these read CPLYWKAPMFRAAGGEKTGFVTAQSFIAMWRKLLNN and RNPTSIEYWFRCMDVDGDGVLSMYELEYFYEEQCER. 4 residues coordinate Ca(2+): Asp-985, Asp-987, Asp-989, and Glu-996. The tract at residues 1105–1132 is disordered; sequence AQFQEGFEDYETDEPASPSEFGNKSNKI.

In terms of assembly, PP2A consists of a common heterodimeric core enzyme, composed of a 36 kDa catalytic subunit (subunit C) and a 65 kDa constant regulatory subunit (PR65 or subunit A), that associates with a variety of regulatory subunits. Proteins that associate with the core dimer include three families of regulatory subunits B (the R2/B/PR55/B55, R3/B''/PR72/PR130/PR59 and R5/B'/B56 families), the 48 kDa variable regulatory subunit, viral proteins, and cell signaling molecules. Expressed in heart, brain, placenta, lung, muscle and kidney.

Its function is as follows. The B regulatory subunit might modulate substrate selectivity and catalytic activity, and might also direct the localization of the catalytic enzyme to a particular subcellular compartment. The protein is Serine/threonine-protein phosphatase 2A regulatory subunit B'' subunit alpha (PPP2R3A) of Homo sapiens (Human).